Reading from the N-terminus, the 126-residue chain is Aspartate 1-decarboxylase (126 aa).

The Schiff-base intermediate with substrate; via pyruvic acid role is filled by Ser25. Position 25 is a pyruvic acid (Ser) (Ser25). Position 57 (Thr57) interacts with substrate. The Proton donor role is filled by Tyr58. 73 to 75 (GGA) is a binding site for substrate.

Belongs to the PanD family. In terms of assembly, heterooctamer of four alpha and four beta subunits. Pyruvate serves as cofactor. In terms of processing, is synthesized initially as an inactive proenzyme, which is activated by self-cleavage at a specific serine bond to produce a beta-subunit with a hydroxyl group at its C-terminus and an alpha-subunit with a pyruvoyl group at its N-terminus.

It localises to the cytoplasm. The enzyme catalyses L-aspartate + H(+) = beta-alanine + CO2. The protein operates within cofactor biosynthesis; (R)-pantothenate biosynthesis; beta-alanine from L-aspartate: step 1/1. Functionally, catalyzes the pyruvoyl-dependent decarboxylation of aspartate to produce beta-alanine. In Xanthomonas oryzae pv. oryzae (strain MAFF 311018), this protein is Aspartate 1-decarboxylase.